The following is a 157-amino-acid chain: DNA gyrase inhibitor (157 aa).

Belongs to the DNA gyrase inhibitor family. Interacts with DNA gyrase.

The protein localises to the cytoplasm. In terms of biological role, inhibits the supercoiling activity of DNA gyrase. Acts by inhibiting DNA gyrase at an early step, prior to (or at the step of) binding of DNA by the gyrase. It protects cells against toxins that target DNA gyrase, by inhibiting activity of these toxins and reducing the formation of lethal double-strand breaks in the cell. This Cronobacter sakazakii (strain ATCC BAA-894) (Enterobacter sakazakii) protein is DNA gyrase inhibitor.